We begin with the raw amino-acid sequence, 358 residues long: Polyadenylate-binding protein-interacting protein 11 (358 aa).

The span at 1–19 (MAVVETGAAATAADAGGVV) shows a compositional bias: low complexity. Residues 1-45 (MAVVETGAAATAADAGGVVIQPPPSSPPSSMTSQDSGVSSDDQNH) are disordered. The segment covering 31 to 41 (MTSQDSGVSSD) has biased composition (polar residues). The short motif at 92 to 102 (KLNPMAEEFVP) is the PAM2-like element. Residues 136-164 (GGYGNENGGFRRKKSFGQGKRRMNARTSM) form a disordered region. The span at 145–159 (FRRKKSFGQGKRRMN) shows a compositional bias: basic residues. Residues 146–157 (RRKKSFGQGKRR) carry the Bipartite nuclear localization signal motif. RRM domains lie at 173-248 (RTVY…PSKT) and 270-346 (RTIY…PSKT).

In terms of tissue distribution, expressed in cauline leaves, stems, immature siliques and primary inflorescences.

It is found in the nucleus. This chain is Polyadenylate-binding protein-interacting protein 11 (CID11), found in Arabidopsis thaliana (Mouse-ear cress).